We begin with the raw amino-acid sequence, 411 residues long: MNFENIQREDKEIYDLIEKELVRQQKGIELIASENIVSPAVMEAMGSYLTNKYAEGYPNKRYYGGCHVVDEIEQIAIDRAKELFGAEHANVQPHSGSQANMAVYFAVLEPGDTVLGMDLSHGGHLTHGSPVNFSGKLFNFVSYGVDKETEMIDYENVRKLAIENKPKLIVAGASAYARILDFPKFREIADEVGALLMVDMAHIAGLVAAGVHPSPVPYSDFVTTTTHKTLRGPRGGLILCKEKYAQILNKNIFPGIQGGPLEHIIAAKAVCFKEALDPSFKTYGENVVENCKELAEQLIARGFKIVSGGTDNHVFLVDLNNKDITGKEAEALLDSVGITVNKNTVPNETRSPFVTSGIRIGTAAITTRGFVKDDMAEIAAVISEAIENRDGDLSALKTRIETLCDKHPLYN.

Residues Leu119 and Gly123–Leu125 contribute to the (6S)-5,6,7,8-tetrahydrofolate site. Position 228 is an N6-(pyridoxal phosphate)lysine (Lys228). Position 351–353 (Ser351–Phe353) interacts with (6S)-5,6,7,8-tetrahydrofolate.

This sequence belongs to the SHMT family. As to quaternary structure, homodimer. The cofactor is pyridoxal 5'-phosphate.

It localises to the cytoplasm. The catalysed reaction is (6R)-5,10-methylene-5,6,7,8-tetrahydrofolate + glycine + H2O = (6S)-5,6,7,8-tetrahydrofolate + L-serine. It participates in one-carbon metabolism; tetrahydrofolate interconversion. It functions in the pathway amino-acid biosynthesis; glycine biosynthesis; glycine from L-serine: step 1/1. Its function is as follows. Catalyzes the reversible interconversion of serine and glycine with tetrahydrofolate (THF) serving as the one-carbon carrier. This reaction serves as the major source of one-carbon groups required for the biosynthesis of purines, thymidylate, methionine, and other important biomolecules. Also exhibits THF-independent aldolase activity toward beta-hydroxyamino acids, producing glycine and aldehydes, via a retro-aldol mechanism. The polypeptide is Serine hydroxymethyltransferase (Clostridium beijerinckii (strain ATCC 51743 / NCIMB 8052) (Clostridium acetobutylicum)).